The primary structure comprises 521 residues: Acetyl-CoA hydrolase (521 aa).

276 to 280 (GIGNI) contributes to the CoA binding site. The 5-glutamyl coenzyme A thioester intermediate role is filled by glutamate 301. CoA-binding residues include asparagine 391 and glycine 395.

This sequence belongs to the acetyl-CoA hydrolase/transferase family.

The protein resides in the cytoplasm. The catalysed reaction is acetyl-CoA + H2O = acetate + CoA + H(+). Functionally, presumably involved in regulating the intracellular acetyl-CoA pool for fatty acid and cholesterol synthesis and fatty acid oxidation. The sequence is that of Acetyl-CoA hydrolase (ach1) from Schizosaccharomyces pombe (strain 972 / ATCC 24843) (Fission yeast).